The primary structure comprises 732 residues: S-adenosyl-L-methionine-dependent tRNA 4-demethylwyosine synthase TYW1 (732 aa).

Residues 79–237 form the Flavodoxin-like domain; that stretch reads VKIFYGSQTG…DFRAWKTKFI (159 aa). FMN is bound by residues 85-89 and 176-208; these read SQTGT and VFGL…HRVM. A disordered region spans residues 248-314; sequence RKKSCGGHCK…HQSLNSIVDV (67 aa). A compositionally biased stretch (basic and acidic residues) spans 259–286; that stretch reads GKCESHQHGSEEREEGSHEQDELHHRDT. Residues 287–301 show a composition bias toward acidic residues; the sequence is EEEEPFESSSEEEFG. The region spanning 400–644 is the Radical SAM core domain; sequence YGIESHRCME…VDLIPEYEIA (245 aa). [4Fe-4S] cluster-binding residues include cysteine 416, cysteine 420, and cysteine 423.

This sequence belongs to the TYW1 family. [4Fe-4S] cluster is required as a cofactor.

It catalyses the reaction N(1)-methylguanosine(37) in tRNA(Phe) + pyruvate + S-adenosyl-L-methionine = 4-demethylwyosine(37) in tRNA(Phe) + 5'-deoxyadenosine + L-methionine + CO2 + H2O. The protein operates within tRNA modification; wybutosine-tRNA(Phe) biosynthesis. Probable component of the wybutosine biosynthesis pathway. Wybutosine is a hyper modified guanosine with a tricyclic base found at the 3'-position adjacent to the anticodon of eukaryotic phenylalanine tRNA. Catalyzes the condensation of N-methylguanine with 2 carbon atoms from pyruvate to form the tricyclic 4-demethylwyosine, an intermediate in wybutosine biosynthesis. In Homo sapiens (Human), this protein is S-adenosyl-L-methionine-dependent tRNA 4-demethylwyosine synthase TYW1 (TYW1).